The chain runs to 1166 residues: Serine/threonine-protein kinase BRI1-like 1 (1166 aa).

An N-terminal signal peptide occupies residues Met1–Gly21. The Extracellular segment spans residues Ile22 to Thr776. Asn33 is a glycosylation site (N-linked (GlcNAc...) asparagine). The Cys pair 1 motif lies at Cys66–Cys73. 20 LRR repeats span residues Arg78 to Thr99, Asn103 to Asp124, Tyr126 to Phe147, Asn152 to Ser173, Ser176 to Ser197, Ser202 to Ile224, Asn227 to Pro248, Phe252 to Gly274, Asn278 to Leu300, Thr303 to Cys325, Trp327 to Lys349, Gly352 to Ser375, Asn376 to Ser397, Val403 to Lys424, Ser427 to Leu449, Asn451 to Lys473, Asn476 to Cys498, Asn500 to Leu522, Lys524 to Lys547, and Ser548 to Gln570. Asn97 carries an N-linked (GlcNAc...) asparagine glycan. N-linked (GlcNAc...) asparagine glycosylation is present at Asn157. N-linked (GlcNAc...) asparagine glycans are attached at residues Asn212, Asn227, Asn237, and Asn257. N-linked (GlcNAc...) asparagine glycosylation is found at Asn362 and Asn373. Residues Asn451 and Asn461 are each glycosylated (N-linked (GlcNAc...) asparagine). Asn521, Asn532, Asn558, and Asn638 each carry an N-linked (GlcNAc...) asparagine glycan. 3 LRR repeats span residues Tyr664–Leu686, Ala688–Leu710, and Phe712–Thr734. Asn722 and Asn743 each carry an N-linked (GlcNAc...) asparagine glycan. A Cys pair 2 motif is present at residues Cys748–Cys755. Residues Ala777–Tyr797 traverse the membrane as a helical segment. Residues Arg798–Pro1166 lie on the Cytoplasmic side of the membrane. Phosphothreonine occurs at positions 848 and 856. Residues Phe859–Leu1147 enclose the Protein kinase domain. ATP-binding positions include Val865–Val873 and Lys887. Tyr932 bears the Phosphotyrosine mark. Asp987 functions as the Proton acceptor in the catalytic mechanism. Residue Ser1022 is modified to Phosphoserine. At Tyr1030 the chain carries Phosphotyrosine. At Thr1141 the chain carries Phosphothreonine. Residues Glu1142–Pro1166 form a disordered region.

It belongs to the protein kinase superfamily. Ser/Thr protein kinase family. As to expression, predominantly expressed in vascular tissues. From 7 day old seedlings, it is expressed in the columella cells of the root tip, in the vascular initials in the meristematic region of the root and in vascular tissues. After germination, it is expressed in the stele cell and in the early differentiation zone of the root, where the expression continues from the root to the hypocotyls and cotyledons following the midvein. In mature plants, it is expressed in the vasculature of the leaf, predominantly in the midvein, and in the vascular bundles of inflorescence stems. Localizes to procambial cells of the vascular bundles located between the differentiating xylem and the phloem.

It is found in the cell membrane. The enzyme catalyses L-seryl-[protein] + ATP = O-phospho-L-seryl-[protein] + ADP + H(+). It catalyses the reaction L-threonyl-[protein] + ATP = O-phospho-L-threonyl-[protein] + ADP + H(+). Receptor with a serine/threonine-protein kinase activity. Regulates, in response to brassinosteroid binding, a signaling cascade involved in plant development. Binds brassinolide. May be involved in cell growth and vascular differentiation. This Arabidopsis thaliana (Mouse-ear cress) protein is Serine/threonine-protein kinase BRI1-like 1 (BRL1).